The primary structure comprises 450 residues: LanC-like protein 2 (450 aa).

The N-myristoyl glycine moiety is linked to residue glycine 2. An interaction with inositol phospholipids region spans residues glycine 2–glycine 15. Tyrosine 198 carries the post-translational modification Phosphotyrosine.

Belongs to the LanC-like protein family. Interacts with an array of inositol phospholipids such as phosphatidylinositol 3-phosphate (PI3P), phosphatidylinositol 4-phosphate (PI4P) and phosphatidylinositol 5-phosphate (PI5P). PIP-binding enhances membrane association. Post-translationally, myristoylated. Essential for membrane association. As to expression, expressed in brain and testis.

It localises to the nucleus. The protein resides in the cytoplasm. Its subcellular location is the cell membrane. Functionally, necessary for abscisic acid (ABA) binding on the cell membrane and activation of the ABA signaling pathway in granulocytes. This chain is LanC-like protein 2 (LANCL2), found in Homo sapiens (Human).